The primary structure comprises 122 residues: Large ribosomal subunit protein uL14 (122 aa).

The protein belongs to the universal ribosomal protein uL14 family. In terms of assembly, part of the 50S ribosomal subunit. Forms a cluster with proteins L3 and L19. In the 70S ribosome, L14 and L19 interact and together make contacts with the 16S rRNA in bridges B5 and B8.

Binds to 23S rRNA. Forms part of two intersubunit bridges in the 70S ribosome. The protein is Large ribosomal subunit protein uL14 of Chelativorans sp. (strain BNC1).